A 682-amino-acid chain; its full sequence is Guanylate cyclase soluble subunit beta-2 (682 aa).

Histidine 43 lines the heme pocket. The region spanning 408–536 (TILFSDVVTF…DTVNTASRME (129 aa)) is the Guanylate cyclase domain. The segment at 592 to 667 (MGRPSAPADG…QPSPDETKTS (76 aa)) is disordered. Over residues 649 to 667 (RNSTDAVNNQPSPDETKTS) the composition is skewed to polar residues.

It belongs to the adenylyl cyclase class-4/guanylyl cyclase family. As to quaternary structure, heterodimer of an alpha and a beta chain. The cofactor is heme. Kidney and liver.

The protein localises to the cytoplasm. The enzyme catalyses GTP = 3',5'-cyclic GMP + diphosphate. With respect to regulation, activated by nitric oxide in the presence of magnesium or manganese ions. In Rattus norvegicus (Rat), this protein is Guanylate cyclase soluble subunit beta-2 (Gucy1b2).